Reading from the N-terminus, the 261-residue chain is Small ribosomal subunit protein uS2 (261 aa).

The protein belongs to the universal ribosomal protein uS2 family.

This Streptococcus mutans serotype c (strain ATCC 700610 / UA159) protein is Small ribosomal subunit protein uS2.